A 148-amino-acid polypeptide reads, in one-letter code: Transcriptional repressor NrdR (148 aa).

A zinc finger lies at 3–34 (CPFCHNEDTQVLDTRVSDEGDTIRRRRRCAKC). The ATP-cone domain occupies 49–139 (PAIVKKNGSR…VYRSFADIES (91 aa)).

Belongs to the NrdR family. Requires Zn(2+) as cofactor.

Functionally, negatively regulates transcription of bacterial ribonucleotide reductase nrd genes and operons by binding to NrdR-boxes. The sequence is that of Transcriptional repressor NrdR from Polynucleobacter necessarius subsp. necessarius (strain STIR1).